Consider the following 534-residue polypeptide: MMLPMMYIYRDPPLHYGLCIFLDVGAVNVFPIFLQMATWRPSENKVYLPPTPVSKVVATDSYVKRTSIFYHAGSSRLLAVGHPYYSVTKDNTKTNIPKVSAYQYRVFRVRLPDPNKFGLPDTNIYNPDQERLVWACVGLEVGRGQPLGAGLSGHPLFNRLDDTESSNLANNNVIEDSRDNISVDGKQTQLCIVGCTPAMGEHWTKGAVCKSTQVTTGDCPPLALINTPIEDGDMIDTGFGAMDFKVLQESKAEVPLDIVQSTCKYPDYLKMSADAYGDSMWFYLRREQLFARHYFNRAGKVGETIPAELYLKGSNGREPPPSSVYVATPSGSMITSEAQLFNKPYWLQRAQGHNNGICWGNQLFVTVVDTTRSTNMTISTATEQLSKYDARKINQYLRHVEEYELQFVFQLCKITLSAEVMAYLHNMNANLLEDWNIGLSPPVATSLEDKYRYVRSTAITCQREQPPTEKQDPLAKYKFWDVNLQDSFSTDLDQFPLGRKFLMQLGTRSKPAVATSKKRSAPTSTSTPAKRKRR.

Positions 508-534 are disordered; it reads RSKPAVATSKKRSAPTSTSTPAKRKRR.

Belongs to the papillomaviridae L1 protein family. Self-assembles into homopentamers. The capsid has an icosahedral symmetry and consists of 72 capsomers, with each capsomer being a pentamer of L1. Interacts with the minor capsid protein L2; this interaction is necessary for viral genome encapsidation. Interacts with protein E2; this interaction enhances E2-dependent replication and transcription activation.

The protein localises to the virion. Its subcellular location is the host nucleus. Functionally, forms an icosahedral capsid with a T=7 symmetry and a 50 nm diameter. The capsid is composed of 72 pentamers linked to each other by disulfide bonds and associated with L2 proteins. Binds to heparan sulfate proteoglycans on cell surface of basal layer keratinocytes to provide initial virion attachment. This binding mediates a conformational change in the virus capsid that facilitates efficient infection. The virion enters the host cell via endocytosis. During virus trafficking, L1 protein dissociates from the viral DNA and the genomic DNA is released to the host nucleus. The virion assembly takes place within the cell nucleus. Encapsulates the genomic DNA together with protein L2. The chain is Major capsid protein L1 from Homo sapiens (Human).